A 157-amino-acid polypeptide reads, in one-letter code: Phosphopantetheine adenylyltransferase (157 aa).

Threonine 10 contacts substrate. Residues 10–11 and histidine 18 contribute to the ATP site; that span reads TF. Residues lysine 42, leucine 74, and arginine 88 each contribute to the substrate site. Residues 89-91, glutamate 99, and 124-130 each bind ATP; these read GLR and NAFISSS.

It belongs to the bacterial CoaD family. In terms of assembly, homohexamer. Mg(2+) is required as a cofactor.

Its subcellular location is the cytoplasm. The catalysed reaction is (R)-4'-phosphopantetheine + ATP + H(+) = 3'-dephospho-CoA + diphosphate. It participates in cofactor biosynthesis; coenzyme A biosynthesis; CoA from (R)-pantothenate: step 4/5. Functionally, reversibly transfers an adenylyl group from ATP to 4'-phosphopantetheine, yielding dephospho-CoA (dPCoA) and pyrophosphate. This Helicobacter pylori (strain Shi470) protein is Phosphopantetheine adenylyltransferase.